Reading from the N-terminus, the 586-residue chain is Phosphomethylpyrimidine synthase (586 aa).

A disordered region spans residues 1 to 59; sequence MKQSVSAEQIELKSSLPGSKKVYVDGPREGMKVPMREIEQSDTNGVPNPPIRVYDTSGP. Positions 22–39 are enriched in basic and acidic residues; it reads VYVDGPREGMKVPMREIE. Substrate is bound by residues Asn-193, Met-222, Tyr-251, His-287, 307-309, 348-351, and Glu-387; these read SRG and DGLR. His-391 is a Zn(2+) binding site. Residue Tyr-414 participates in substrate binding. His-455 provides a ligand contact to Zn(2+). [4Fe-4S] cluster is bound by residues Cys-535, Cys-538, and Cys-543.

Belongs to the ThiC family. The cofactor is [4Fe-4S] cluster.

It carries out the reaction 5-amino-1-(5-phospho-beta-D-ribosyl)imidazole + S-adenosyl-L-methionine = 4-amino-2-methyl-5-(phosphooxymethyl)pyrimidine + CO + 5'-deoxyadenosine + formate + L-methionine + 3 H(+). It participates in cofactor biosynthesis; thiamine diphosphate biosynthesis. In terms of biological role, catalyzes the synthesis of the hydroxymethylpyrimidine phosphate (HMP-P) moiety of thiamine from aminoimidazole ribotide (AIR) in a radical S-adenosyl-L-methionine (SAM)-dependent reaction. The protein is Phosphomethylpyrimidine synthase of Bacillus cereus (strain ATCC 10987 / NRS 248).